Here is a 351-residue protein sequence, read N- to C-terminus: Biotin synthase (351 aa).

The 228-residue stretch at asparagine 42–arginine 269 folds into the Radical SAM core domain. Cysteine 57, cysteine 61, and cysteine 64 together coordinate [4Fe-4S] cluster. 4 residues coordinate [2Fe-2S] cluster: cysteine 101, cysteine 132, cysteine 192, and arginine 264.

It belongs to the radical SAM superfamily. Biotin synthase family. As to quaternary structure, homodimer. It depends on [4Fe-4S] cluster as a cofactor. [2Fe-2S] cluster is required as a cofactor.

It catalyses the reaction (4R,5S)-dethiobiotin + (sulfur carrier)-SH + 2 reduced [2Fe-2S]-[ferredoxin] + 2 S-adenosyl-L-methionine = (sulfur carrier)-H + biotin + 2 5'-deoxyadenosine + 2 L-methionine + 2 oxidized [2Fe-2S]-[ferredoxin]. Its pathway is cofactor biosynthesis; biotin biosynthesis; biotin from 7,8-diaminononanoate: step 2/2. Functionally, catalyzes the conversion of dethiobiotin (DTB) to biotin by the insertion of a sulfur atom into dethiobiotin via a radical-based mechanism. This Psychromonas ingrahamii (strain DSM 17664 / CCUG 51855 / 37) protein is Biotin synthase.